We begin with the raw amino-acid sequence, 380 residues long: MTDYPIKYRLIKAEKHTGARLGEIITPHGTFPTPMFMPVGTQATVKTQSPEELKAIGSGIILSNTYHLWLRPGDELIARSGGLHKFMNWDQPILTDSGGFQVYSLADSRNITEEGVTFKNHLNGSKMFLSPEKAISIQNNLGSDIMMSFDECPQFYQPYDYVKKSIERTSRWAERGLKAHRRPHDQGLFGIVQGAGFEDLRRQSAADLVAMDFPGYSIGGLAVGESHEEMNAVLDFTTPLLPENKPRYLMGVGAPDSLIDGVIRGVDMFDCVLPTRIARNGTCMTSEGRLVIKNAKFAEDFTPLDHDCDCYTCQNYSRAYIRHLLKADETFGIRLTSYHNLYFLVNLMKKVRQAIMDDNLLEFRQDFLERYGYNKSNRNF.

The active-site Proton acceptor is aspartate 96. Residues 96-100 (DSGGF), aspartate 150, glutamine 193, and glycine 220 each bind substrate. An RNA binding region spans residues 251–257 (GVGAPDS). Aspartate 270 (nucleophile) is an active-site residue. An RNA binding; important for wobble base 34 recognition region spans residues 275–279 (TRIAR). Positions 308, 310, 313, and 339 each coordinate Zn(2+).

The protein belongs to the queuine tRNA-ribosyltransferase family. As to quaternary structure, homodimer. Within each dimer, one monomer is responsible for RNA recognition and catalysis, while the other monomer binds to the replacement base PreQ1. Zn(2+) serves as cofactor.

It carries out the reaction 7-aminomethyl-7-carbaguanine + guanosine(34) in tRNA = 7-aminomethyl-7-carbaguanosine(34) in tRNA + guanine. Its pathway is tRNA modification; tRNA-queuosine biosynthesis. In terms of biological role, catalyzes the base-exchange of a guanine (G) residue with the queuine precursor 7-aminomethyl-7-deazaguanine (PreQ1) at position 34 (anticodon wobble position) in tRNAs with GU(N) anticodons (tRNA-Asp, -Asn, -His and -Tyr). Catalysis occurs through a double-displacement mechanism. The nucleophile active site attacks the C1' of nucleotide 34 to detach the guanine base from the RNA, forming a covalent enzyme-RNA intermediate. The proton acceptor active site deprotonates the incoming PreQ1, allowing a nucleophilic attack on the C1' of the ribose to form the product. After dissociation, two additional enzymatic reactions on the tRNA convert PreQ1 to queuine (Q), resulting in the hypermodified nucleoside queuosine (7-(((4,5-cis-dihydroxy-2-cyclopenten-1-yl)amino)methyl)-7-deazaguanosine). The protein is Queuine tRNA-ribosyltransferase of Streptococcus pyogenes serotype M1.